Here is a 210-residue protein sequence, read N- to C-terminus: Proline-rich protein 20G (210 aa).

The span at 1–11 (MEEPRHSKRPR) shows a compositional bias: basic residues. The tract at residues 1–82 (MEEPRHSKRP…GGSWRAGRGR (82 aa)) is disordered. A compositionally biased stretch (gly residues) spans 69-82 (GQRGGGSWRAGRGR).

The protein belongs to the PRR20 family.

This is Proline-rich protein 20G from Homo sapiens (Human).